Consider the following 222-residue polypeptide: UPF0502 protein Shewmr7_1629 (222 aa).

It belongs to the UPF0502 family.

This is UPF0502 protein Shewmr7_1629 from Shewanella sp. (strain MR-7).